We begin with the raw amino-acid sequence, 1792 residues long: Eukaryotic translation initiation factor 4G (1792 aa).

Positions 1–12 are enriched in basic and acidic residues; it reads MSQRGDRGEGHA. 11 disordered regions span residues 1–285, 424–446, 491–590, 612–659, 678–761, 874–912, 960–993, 999–1018, 1275–1299, 1407–1503, and 1537–1600; these read MSQR…PRPP, DSSG…TYGS, SPSM…PTPV, NSVP…EDLK, GVNK…NESH, VASE…EITR, SSSI…LDDW, MSTP…EANG, GERE…EERE, WQQR…HRTT, and ELSS…KLYS. Gly residues predominate over residues 21 to 42; sequence FGGGHRGGGGVGGAGKGGGGSS. Positions 88–107 are enriched in pro residues; that stretch reads PLRPPAPQNAPAHVPVPAPR. Composition is skewed to polar residues over residues 147–156 and 179–191; these read RISSTSTSQG and STMQ…SSAP. Low complexity-rich tracts occupy residues 216 to 243, 263 to 278, and 432 to 442; these read PQAP…PLQQ, PSQV…SVPN, and PSVQQQSQPVS. Polar residues predominate over residues 491 to 517; that stretch reads SPSMNTGPGSNKDNLAGSTTSGHSQVT. Composition is skewed to basic and acidic residues over residues 545 to 564, 571 to 587, and 633 to 643; these read DVNK…KDNE, KSGE…EKHP, and DSNKNATKDTR. A compositionally biased stretch (polar residues) spans 644-654; the sequence is NLSQEPQSASS. Low complexity predominate over residues 699–718; sequence AADASSIDRSSARSTSESTE. The span at 964–990 shows a compositional bias: basic and acidic residues; it reads ADHELPDESSEKEVNMGEDEGKKKVEL. The tract at residues 1018–1030 is EIF4E-binding; sequence GRKRYSRDFLLTL. One can recognise an MIF4G domain in the interval 1183–1406; sequence QRQLKAILNK…RDSIDLRKNK (224 aa). A compositionally biased stretch (acidic residues) spans 1278–1289; sequence EEAEADKTEEEG. Composition is skewed to basic and acidic residues over residues 1290-1299 and 1411-1432; these read EIKQTKEERE and RKVE…ERHA. Low complexity-rich tracts occupy residues 1439-1450 and 1461-1470; these read RGSVVGSGPRRG and SAAALASPSS. 2 stretches are compositionally biased toward basic and acidic residues: residues 1490 to 1503 and 1559 to 1572; these read IRFE…HRTT and AREE…DRSG. Positions 1576-1593 are enriched in polar residues; sequence PNTQFAGPSNRPASQEGR. The 125-residue stretch at 1603 to 1727 folds into the MI domain; that stretch reads DLREKSISAI…SLQEVGTLIE (125 aa).

This sequence belongs to the eukaryotic initiation factor 4G family. In terms of assembly, EIF4F is a multi-subunit complex, the composition of which varies with external and internal environmental conditions. It is composed of at least EIF4A, EIF4E and EIF4G. In higher plants two isoforms of EIF4F have been identified, named isoform EIF4F and isoform EIF(iso)4F. Isoform EIF4F has subunits p220 and p26, whereas isoform EIF(iso)4F has subunits p82 and p28.

Functionally, component of the protein complex eIF4F, which is involved in the recognition of the mRNA cap, ATP-dependent unwinding of 5'-terminal secondary structure and recruitment of mRNA to the ribosome. This chain is Eukaryotic translation initiation factor 4G, found in Oryza sativa subsp. japonica (Rice).